A 149-amino-acid chain; its full sequence is HMG1/2-like protein (149 aa).

Basic and acidic residues-rich tracts occupy residues M1–T15 and K35–K44. Disordered stretches follow at residues M1–F52 and A112–D149. The segment at residues P45–N114 is a DNA-binding region (HMG box). Residues N134–D149 show a composition bias toward acidic residues.

This sequence belongs to the HMGB family.

The protein resides in the nucleus. The sequence is that of HMG1/2-like protein from Vicia faba (Broad bean).